A 128-amino-acid chain; its full sequence is CD59 glycoprotein (128 aa).

The N-terminal stretch at 1 to 25 (MGIQGGSVLFGLLLILAVFCHSGHS) is a signal peptide. Residues 26 to 108 (LQCYSCPYST…ILENGGTTLS (83 aa)) form the UPAR/Ly6 domain. Disulfide bonds link cysteine 28-cysteine 51, cysteine 31-cysteine 38, cysteine 44-cysteine 64, cysteine 70-cysteine 88, and cysteine 89-cysteine 94. Asparagine 43 is a glycosylation site (N-linked (GlcNAc...) asparagine). Asparagine 102 carries GPI-anchor amidated asparagine lipidation. Residues 103 to 128 (GGTTLSKKTVLLLVTPFLAAAWSLHP) constitute a propeptide, removed in mature form.

Interacts with T-cell surface antigen CD2. N- and O-glycosylated.

Its subcellular location is the cell membrane. It is found in the secreted. Its function is as follows. Potent inhibitor of the complement membrane attack complex (MAC) action, which protects self-cells from damage during complement activation. Acts by binding to the beta-haipins of C8 (C8A and C8B) components of the assembling MAC, forming an intermolecular beta-sheet that prevents incorporation of the multiple copies of C9 required for complete formation of the osmolytic pore. This Callithrix sp. (Marmoset) protein is CD59 glycoprotein.